Consider the following 383-residue polypeptide: MKNKLPPFIEIYRALIATPSISATEEALDQSNADLITLLADWFKDLGFNVEVQPVPGTRNKFNMLASIGQGAGGLLLAGHTDTVPFDDGRWTRDPFTLTEHDGKLYGLGTADMKGFFAFILDALRDIDVTKLKKPLYILATADEETSMAGARYFAETTALRPDCAIIGEPTSLQPVRAHKGHISNAIRIQGQSGHSSDPARGVNAIELMHDAIGHILQLRDNLKERYHYEAFTVPYPTLNLGHIHGGDASNRICACCELHMDIRPLPGMTLNELNGLLNDALAPVIERWPGRLTVDELHPPIPGYECPPNHQLVEVVEKLLGAKTEVVNYCTEAPFIQTLCPTLVLGPGSINQAHQPDEYLETRFIKPTRELIIQVIHHFCWH.

His-80 is a binding site for Zn(2+). The active site involves Asp-82. Asp-112 is a binding site for Zn(2+). Glu-144 is an active-site residue. Positions 145, 169, and 355 each coordinate Zn(2+).

This sequence belongs to the peptidase M20A family. ArgE subfamily. Homodimer. Zn(2+) is required as a cofactor. Co(2+) serves as cofactor. Requires glutathione as cofactor.

It localises to the cytoplasm. It carries out the reaction N(2)-acetyl-L-ornithine + H2O = L-ornithine + acetate. It participates in amino-acid biosynthesis; L-arginine biosynthesis; L-ornithine from N(2)-acetyl-L-ornithine (linear): step 1/1. Catalyzes the hydrolysis of the amide bond of N(2)-acetylated L-amino acids. Cleaves the acetyl group from N-acetyl-L-ornithine to form L-ornithine, an intermediate in L-arginine biosynthesis pathway, and a branchpoint in the synthesis of polyamines. In Shigella boydii serotype 4 (strain Sb227), this protein is Acetylornithine deacetylase.